A 619-amino-acid polypeptide reads, in one-letter code: Dihydroxy-acid dehydratase 1 (619 aa).

D81 contacts Mg(2+). Residue C122 coordinates [2Fe-2S] cluster. Residues D123 and K124 each contribute to the Mg(2+) site. K124 carries the N6-carboxylysine modification. C198 is a binding site for [2Fe-2S] cluster. E494 contacts Mg(2+). The active-site Proton acceptor is the S520.

The protein belongs to the IlvD/Edd family. Homodimer. [2Fe-2S] cluster is required as a cofactor. It depends on Mg(2+) as a cofactor.

It catalyses the reaction (2R)-2,3-dihydroxy-3-methylbutanoate = 3-methyl-2-oxobutanoate + H2O. It carries out the reaction (2R,3R)-2,3-dihydroxy-3-methylpentanoate = (S)-3-methyl-2-oxopentanoate + H2O. The protein operates within amino-acid biosynthesis; L-isoleucine biosynthesis; L-isoleucine from 2-oxobutanoate: step 3/4. It functions in the pathway amino-acid biosynthesis; L-valine biosynthesis; L-valine from pyruvate: step 3/4. Its function is as follows. Functions in the biosynthesis of branched-chain amino acids. Catalyzes the dehydration of (2R,3R)-2,3-dihydroxy-3-methylpentanoate (2,3-dihydroxy-3-methylvalerate) into 2-oxo-3-methylpentanoate (2-oxo-3-methylvalerate) and of (2R)-2,3-dihydroxy-3-methylbutanoate (2,3-dihydroxyisovalerate) into 2-oxo-3-methylbutanoate (2-oxoisovalerate), the penultimate precursor to L-isoleucine and L-valine, respectively. The protein is Dihydroxy-acid dehydratase 1 of Bordetella bronchiseptica (strain ATCC BAA-588 / NCTC 13252 / RB50) (Alcaligenes bronchisepticus).